Consider the following 171-residue polypeptide: Small ribosomal subunit protein mS25 (171 aa).

Belongs to the mitochondrion-specific ribosomal protein mS25 family. As to quaternary structure, component of the mitochondrial ribosome small subunit (28S) which comprises a 12S rRNA and about 30 distinct proteins.

The protein localises to the mitochondrion. This chain is Small ribosomal subunit protein mS25 (Mrps25), found in Rattus norvegicus (Rat).